We begin with the raw amino-acid sequence, 1184 residues long: DNA-directed RNA polymerase subunit beta (1184 aa).

A disordered region spans residues D1160–E1184.

It belongs to the RNA polymerase beta chain family. As to quaternary structure, the RNAP catalytic core consists of 2 alpha, 1 beta, 1 beta' and 1 omega subunit. When a sigma factor is associated with the core the holoenzyme is formed, which can initiate transcription.

It carries out the reaction RNA(n) + a ribonucleoside 5'-triphosphate = RNA(n+1) + diphosphate. Functionally, DNA-dependent RNA polymerase catalyzes the transcription of DNA into RNA using the four ribonucleoside triphosphates as substrates. The protein is DNA-directed RNA polymerase subunit beta of Listeria monocytogenes serotype 4b (strain F2365).